A 448-amino-acid chain; its full sequence is Protein EVI2B (448 aa).

Residues 1 to 21 form the signal peptide; the sequence is MDPKYFILILFCGHLNNTFFS. 2 N-linked (GlcNAc...) asparagine glycosylation sites follow: asparagine 16 and asparagine 50. At 22–202 the chain is on the extracellular side; sequence KTETITTEKQ…QTPQKNNYNS (181 aa). A disordered region spans residues 74–108; sequence AKVTAGQPTPAVYTSSEKPEAHTSAGQPLAYNTKQ. Residues 97–108 show a composition bias toward polar residues; sequence SAGQPLAYNTKQ. N-linked (GlcNAc...) asparagine glycosylation is present at asparagine 114. A helical transmembrane segment spans residues 203–226; it reads IAAILIGVLLTSMLVAIIIIVLWK. At 227–448 the chain is on the cytoplasmic side; sequence CLRKPVLNDQ…SLPPPPAELL (222 aa). Residue threonine 249 is modified to Phosphothreonine. Phosphoserine occurs at positions 268, 271, 278, and 294. Disordered stretches follow at residues 298–372 and 427–448; these read IEDS…DSTS and SIPPNSDQDLNESLPPPPAELL. Composition is skewed to polar residues over residues 313–333 and 350–372; these read VNGTSEDSADGSTVGTAVSSS and QESNQSDKPTMTIVSPLPNDSTS.

In terms of tissue distribution, bone marrow, peripheral blood mononuclear cells, fibroblasts and Epstein-Barr virus-transformed lymphoblastoid cell lines. Strongly expressed in granulocytic cells, and weakly on lymphocytes cells.

The protein resides in the membrane. Required for granulocyte differentiation and functionality of hematopoietic progenitor cells through the control of cell cycle progression and survival of hematopoietic progenitor cells. This chain is Protein EVI2B, found in Homo sapiens (Human).